We begin with the raw amino-acid sequence, 218 residues long: ATP-dependent dethiobiotin synthetase BioD (218 aa).

Residue 9–15 coordinates ATP; sequence TNAGKTT. Thr-14 lines the Mg(2+) pocket. The active site involves Lys-35. Lys-35 is a binding site for phosphate. Thr-39 provides a ligand contact to substrate. ATP contacts are provided by residues Asp-50, Glu-116, and 116 to 119; that span reads EGAG. Residues Asp-50 and Glu-116 each coordinate Mg(2+). Position 116-119 (116-119) interacts with phosphate; that stretch reads EGAG. A substrate-binding site is contributed by 151 to 154; that stretch reads GLIN. ATP contacts are provided by residues Asn-175 and 175-177; that span reads NLK.

This sequence belongs to the dethiobiotin synthetase family. Homodimer. It depends on Mg(2+) as a cofactor.

The protein resides in the cytoplasm. The catalysed reaction is (7R,8S)-7,8-diammoniononanoate + CO2 + ATP = (4R,5S)-dethiobiotin + ADP + phosphate + 3 H(+). The protein operates within cofactor biosynthesis; biotin biosynthesis; biotin from 7,8-diaminononanoate: step 1/2. Catalyzes a mechanistically unusual reaction, the ATP-dependent insertion of CO2 between the N7 and N8 nitrogen atoms of 7,8-diaminopelargonic acid (DAPA, also called 7,8-diammoniononanoate) to form a ureido ring. The polypeptide is ATP-dependent dethiobiotin synthetase BioD (Helicobacter pylori (strain ATCC 700392 / 26695) (Campylobacter pylori)).